Reading from the N-terminus, the 204-residue chain is LexA repressor (204 aa).

Positions 28–48 form a DNA-binding region, H-T-H motif; sequence VREIGEAVGLASSSTVHGHLD. Catalysis depends on for autocatalytic cleavage activity residues S126 and K164.

It belongs to the peptidase S24 family. As to quaternary structure, homodimer.

It carries out the reaction Hydrolysis of Ala-|-Gly bond in repressor LexA.. In terms of biological role, represses a number of genes involved in the response to DNA damage (SOS response), including recA and lexA. In the presence of single-stranded DNA, RecA interacts with LexA causing an autocatalytic cleavage which disrupts the DNA-binding part of LexA, leading to derepression of the SOS regulon and eventually DNA repair. The sequence is that of LexA repressor from Exiguobacterium sibiricum (strain DSM 17290 / CCUG 55495 / CIP 109462 / JCM 13490 / 255-15).